Consider the following 241-residue polypeptide: Purine nucleoside phosphorylase DeoD-type (241 aa).

His-5 contributes to the a purine D-ribonucleoside binding site. Phosphate-binding positions include Gly-21, Arg-25, Arg-44, and 88–91 (RVGS). Residues 180–182 (EME) and 204–205 (SD) contribute to the a purine D-ribonucleoside site. The Proton donor role is filled by Asp-205.

Belongs to the PNP/UDP phosphorylase family. As to quaternary structure, homohexamer; trimer of homodimers.

The enzyme catalyses a purine D-ribonucleoside + phosphate = a purine nucleobase + alpha-D-ribose 1-phosphate. It catalyses the reaction a purine 2'-deoxy-D-ribonucleoside + phosphate = a purine nucleobase + 2-deoxy-alpha-D-ribose 1-phosphate. In terms of biological role, catalyzes the reversible phosphorolytic breakdown of the N-glycosidic bond in the beta-(deoxy)ribonucleoside molecules, with the formation of the corresponding free purine bases and pentose-1-phosphate. The protein is Purine nucleoside phosphorylase DeoD-type of Yersinia enterocolitica serotype O:8 / biotype 1B (strain NCTC 13174 / 8081).